Reading from the N-terminus, the 542-residue chain is Cryptochrome-1 (542 aa).

The region spanning 5 to 140 (GANVIWFRHG…DFVEKVSHTL (136 aa)) is the Photolyase/cryptochrome alpha/beta domain. FAD contacts are provided by residues Arg237, Ser265, Ser267, Gln311, His378, 410–412 (DAD), Cys416, and Asn419.

This sequence belongs to the DNA photolyase class-1 family. In terms of assembly, interacts with tim and per; promoted by light conditions. Interaction with tim irreversibly commits tim to proteasomal degradation. Interacts with l(1)G0136/CG8198. It depends on FAD as a cofactor. As to expression, expressed at higher levels in the head than in body and it is more expressed in antennae than in legs, wings and mouth appendages. Prominent expression is seen in cells of the lateral brain, which are close to or coincident with the clock neurons. Abundance oscillates in a circadian manner.

It is found in the cytoplasm. It localises to the perinuclear region. Its subcellular location is the nucleus. Functionally, blue light-dependent regulator that is the input of the circadian feedback loop. Has no photolyase activity for cyclobutane pyrimidine dimers or 6-4 photoproducts. Regulation of expression by light suggests a role in photoreception for locomotor activity rhythms. Functions, together with per, as a transcriptional repressor required for the oscillation of peripheral circadian clocks and for the correct specification of clock cells. Genes directly activated by the transcription factors Clock (Clk) and cycle (cyc) are repressed by cry. Necessary for light-dependent magnetosensitivity, an intact circadian system is not required for the magnetoreception mechanism to operate. Required for both the naive and trained responses to magnetic field, consistent with the notion that cry is in the input pathway of magnetic sensing. In Drosophila melanogaster (Fruit fly), this protein is Cryptochrome-1.